Reading from the N-terminus, the 124-residue chain is Small ribosomal subunit protein uS12 (124 aa).

Residues 105-124 (QGVKNRKQARSRYGAKKEKG) are disordered. The segment covering 108-118 (KNRKQARSRYG) has biased composition (basic residues).

It belongs to the universal ribosomal protein uS12 family. In terms of assembly, part of the 30S ribosomal subunit. Contacts proteins S8 and S17. May interact with IF1 in the 30S initiation complex.

Its function is as follows. With S4 and S5 plays an important role in translational accuracy. In terms of biological role, interacts with and stabilizes bases of the 16S rRNA that are involved in tRNA selection in the A site and with the mRNA backbone. Located at the interface of the 30S and 50S subunits, it traverses the body of the 30S subunit contacting proteins on the other side and probably holding the rRNA structure together. The combined cluster of proteins S8, S12 and S17 appears to hold together the shoulder and platform of the 30S subunit. The protein is Small ribosomal subunit protein uS12 (rpsL) of Mycobacterium bovis (strain ATCC BAA-935 / AF2122/97).